The sequence spans 350 residues: tRNA uridine(34) hydroxylase (350 aa).

The Rhodanese domain maps to 146–240 (DDPDALFIDM…YARKAREQGL (95 aa)). Residue Cys-200 is the Cysteine persulfide intermediate of the active site.

The protein belongs to the TrhO family.

It catalyses the reaction uridine(34) in tRNA + AH2 + O2 = 5-hydroxyuridine(34) in tRNA + A + H2O. In terms of biological role, catalyzes oxygen-dependent 5-hydroxyuridine (ho5U) modification at position 34 in tRNAs. This Shigella flexneri serotype 5b (strain 8401) protein is tRNA uridine(34) hydroxylase.